A 390-amino-acid polypeptide reads, in one-letter code: 3-ketoacyl-CoA thiolase (390 aa).

The active-site Acyl-thioester intermediate is Cys95. Catalysis depends on proton acceptor residues His346 and Cys376.

Belongs to the thiolase-like superfamily. Thiolase family. In terms of assembly, heterotetramer of two alpha chains (FadB) and two beta chains (FadA).

It is found in the cytoplasm. It catalyses the reaction an acyl-CoA + acetyl-CoA = a 3-oxoacyl-CoA + CoA. The protein operates within lipid metabolism; fatty acid beta-oxidation. Functionally, catalyzes the final step of fatty acid oxidation in which acetyl-CoA is released and the CoA ester of a fatty acid two carbons shorter is formed. This Acinetobacter baumannii (strain AB307-0294) protein is 3-ketoacyl-CoA thiolase.